The sequence spans 210 residues: T-cell surface glycoprotein CD8 beta chain (210 aa).

The first 21 residues, 1 to 21, serve as a signal peptide directing secretion; the sequence is MRPRLWLLLAAQLTVLHGNSV. The Ig-like V-type domain maps to 22 to 132; sequence LQQTPAYIKV…ELTFGKGTQL (111 aa). Residues 22–170 lie on the Extracellular side of the membrane; the sequence is LQQTPAYIKV…ETQKGPLCSP (149 aa). An intrachain disulfide couples Cys41 to Cys116. N-linked (GlcNAc...) asparagine glycosylation is present at Asn102. The helical transmembrane segment at 171–191 threads the bilayer; it reads ITLGLLVAGVLVLLVSLGVAI. At 192–210 the chain is on the cytoplasmic side; that stretch reads HLCCRRRRARLRFMKQFYK. A Phosphotyrosine modification is found at Tyr209.

Forms disulfide-linked heterodimers with CD8A at the cell surface. Interacts with CD3D; this interaction couples TCR-CD3 with CD8. Interacts with LCK. In terms of processing, phosphorylated as a consequence of T-cell activation. Post-translationally, palmitoylated at the cytoplasmic tail and thereby targets the heterodimer CD8A/CD8B to lipid rafts unlike CD8A homodimers. As to expression, isoform 1, isoform 3, isoform 5, isoform 6, isoform 7 and isoform 8 are expressed in both thymus and peripheral CD8+ T-cells. Expression of isoform 1 is higher in thymus CD8+ T-cells than in peripheral CD8+ T-cells. Expression of isoform 6 is higher in peripheral CD8+ T-cells than in thymus CD8+ T-cells.

The protein resides in the cell membrane. Its subcellular location is the secreted. Integral membrane glycoprotein that plays an essential role in the immune response and serves multiple functions in responses against both external and internal offenses. In T-cells, functions primarily as a coreceptor for MHC class I molecule:peptide complex. The antigens presented by class I peptides are derived from cytosolic proteins while class II derived from extracellular proteins. Interacts simultaneously with the T-cell receptor (TCR) and the MHC class I proteins presented by antigen presenting cells (APCs). In turn, recruits the Src kinase LCK to the vicinity of the TCR-CD3 complex. A palmitoylation site in the cytoplasmic tail of CD8B chain contributes to partitioning of CD8 into the plasma membrane lipid rafts where signaling proteins are enriched. Once LCK recruited, it initiates different intracellular signaling pathways by phosphorylating various substrates ultimately leading to lymphokine production, motility, adhesion and activation of cytotoxic T-lymphocytes (CTLs). Additionally, plays a critical role in thymic selection of CD8+ T-cells. The chain is T-cell surface glycoprotein CD8 beta chain (CD8B) from Homo sapiens (Human).